The chain runs to 994 residues: Probable beta-galactosidase C (994 aa).

Positions 1-19 (MKLQSILSCWAILVAQIWA) are cleaved as a signal peptide. Substrate is bound at residue Tyr78. The N-linked (GlcNAc...) asparagine glycan is linked to Asn88. Residues Asn123, Ala124, Glu125, and Asn183 each coordinate substrate. Glu184 functions as the Proton donor in the catalytic mechanism. Position 247 (Tyr247) interacts with substrate. Cysteines 253 and 301 form a disulfide. Residue Asn272 is glycosylated (N-linked (GlcNAc...) asparagine). Catalysis depends on Glu283, which acts as the Nucleophile. Tyr350 provides a ligand contact to substrate. 14 N-linked (GlcNAc...) asparagine glycosylation sites follow: Asn388, Asn407, Asn433, Asn500, Asn514, Asn521, Asn584, Asn600, Asn674, Asn712, Asn717, Asn757, Asn861, and Asn969.

The protein belongs to the glycosyl hydrolase 35 family.

It is found in the secreted. The catalysed reaction is Hydrolysis of terminal non-reducing beta-D-galactose residues in beta-D-galactosides.. Its function is as follows. Cleaves beta-linked terminal galactosyl residues from gangliosides, glycoproteins, and glycosaminoglycans. The polypeptide is Probable beta-galactosidase C (lacC) (Aspergillus niger (strain ATCC MYA-4892 / CBS 513.88 / FGSC A1513)).